A 393-amino-acid polypeptide reads, in one-letter code: S-adenosylmethionine synthase (393 aa).

Glu9 contributes to the Mg(2+) binding site. Position 15 (His15) interacts with ATP. Glu43 serves as a coordination point for K(+). Glu56 and Gln99 together coordinate L-methionine. ATP-binding positions include 167–169 (DGK), 235–238 (SGRF), Asp246, 252–253 (RK), Ala269, Lys273, and Lys277. Residue Asp246 participates in L-methionine binding. Position 277 (Lys277) interacts with L-methionine.

Belongs to the AdoMet synthase family. As to quaternary structure, homotetramer. Mn(2+) is required as a cofactor. The cofactor is Mg(2+). It depends on Co(2+) as a cofactor. Requires K(+) as cofactor.

The protein localises to the cytoplasm. It catalyses the reaction L-methionine + ATP + H2O = S-adenosyl-L-methionine + phosphate + diphosphate. It functions in the pathway amino-acid biosynthesis; S-adenosyl-L-methionine biosynthesis; S-adenosyl-L-methionine from L-methionine: step 1/1. Its function is as follows. Catalyzes the formation of S-adenosylmethionine from methionine and ATP. The reaction comprises two steps that are both catalyzed by the same enzyme: formation of S-adenosylmethionine (AdoMet) and triphosphate, and subsequent hydrolysis of the triphosphate. This chain is S-adenosylmethionine synthase (SAMS), found in Litchi chinensis (Lychee).